A 475-amino-acid polypeptide reads, in one-letter code: Sulfate adenylyltransferase subunit 1 (475 aa).

Positions Lys25 to Arg239 constitute a tr-type G domain. The segment at Gly34–Ser41 is G1. Gly34–Ser41 provides a ligand contact to GTP. The segment at Gly92–Asp96 is G2. The tract at residues Asp113–Gly116 is G3. Residues Asp113–His117 and Asn168–Asp171 each bind GTP. The segment at Asn168–Asp171 is G4. A G5 region spans residues Ser206–Leu208.

The protein belongs to the TRAFAC class translation factor GTPase superfamily. Classic translation factor GTPase family. CysN/NodQ subfamily. In terms of assembly, heterodimer composed of CysD, the smaller subunit, and CysN.

The catalysed reaction is sulfate + ATP + H(+) = adenosine 5'-phosphosulfate + diphosphate. It functions in the pathway sulfur metabolism; hydrogen sulfide biosynthesis; sulfite from sulfate: step 1/3. In terms of biological role, with CysD forms the ATP sulfurylase (ATPS) that catalyzes the adenylation of sulfate producing adenosine 5'-phosphosulfate (APS) and diphosphate, the first enzymatic step in sulfur assimilation pathway. APS synthesis involves the formation of a high-energy phosphoric-sulfuric acid anhydride bond driven by GTP hydrolysis by CysN coupled to ATP hydrolysis by CysD. The sequence is that of Sulfate adenylyltransferase subunit 1 from Shigella boydii serotype 18 (strain CDC 3083-94 / BS512).